The sequence spans 354 residues: Green-sensitive opsin-3 (354 aa).

Residues 1–39 lie on the Extracellular side of the membrane; it reads MSGLNGFEGDNFYIPMSNRTGLVRDPFVYEQYYLAEPWQ. The N-linked (GlcNAc...) asparagine glycan is linked to N18. Residues 40-64 form a helical membrane-spanning segment; it reads FKLLACYMFFLICLGLPINGFTLFV. Residues 65–76 are Cytoplasmic-facing; the sequence is TAQHKKLQQPLN. Residues 77 to 102 traverse the membrane as a helical segment; the sequence is FILVNLAVAGMIMVCFGFTITISSAV. Residues 103–116 lie on the Extracellular side of the membrane; sequence NGYFYFGPTACAIE. A disulfide bridge connects residues C113 and C190. The chain crosses the membrane as a helical span at residues 117 to 136; that stretch reads GFMATLGGEVALWSLVVLAI. At 137–155 the chain is on the cytoplasmic side; sequence ERYIVVCKPMGSFKFSASH. A helical transmembrane segment spans residues 156 to 179; it reads ALGGIGFTWFMAMTCAAPPLVGWS. Residues 180 to 205 lie on the Extracellular side of the membrane; the sequence is RYIPEGLQCSCGPDYYTLNPKYNNES. Residue N203 is glycosylated (N-linked (GlcNAc...) asparagine). The chain crosses the membrane as a helical span at residues 206 to 233; it reads YVIYMFVVHFIVPVTVIFFTYGRLVCTV. Topologically, residues 234–255 are cytoplasmic; it reads KSAAAAQQDSASTQKAEKEVTR. Residues 256–279 form a helical membrane-spanning segment; the sequence is MVILMVVGFLVAWTPYATVAAWIF. Residues 280 to 287 are Extracellular-facing; it reads FNKGAAFT. Residues 288 to 312 form a helical membrane-spanning segment; it reads AQFMAVPAFFSKSSALFNPIIYVLL. K299 carries the post-translational modification N6-(retinylidene)lysine. At 313-354 the chain is on the cytoplasmic side; that stretch reads NKQFRNCMLTTLFCGKNPLGDEESSTVSTKTEVSTVSSVSPA.

The protein belongs to the G-protein coupled receptor 1 family. Opsin subfamily. The color pigments are found in the cone photoreceptor cells.

It localises to the membrane. Functionally, visual pigments are the light-absorbing molecules that mediate vision. They consist of an apoprotein, opsin, covalently linked to cis-retinal. The chain is Green-sensitive opsin-3 (RH11) from Psalidodon fasciatus (Banded astyanax).